A 602-amino-acid polypeptide reads, in one-letter code: Bifunctional xylanase/deacetylase (602 aa).

The signal sequence occupies residues 1–14; that stretch reads MSATLLVPSMTVKA. One can recognise a GH11 domain in the interval 17-211; sequence TIYNNKTGNQ…SSGSASVYKN (195 aa). Catalysis depends on E108, which acts as the Nucleophile. E198 functions as the Proton donor in the catalytic mechanism. Residues 216 to 240 are disordered; the sequence is GGSSSSSGNQGGNQGGNTGNENAGN. Residues 224-233 are compositionally biased toward gly residues; the sequence is NQGGNQGGNT. The CBM6 domain occupies 249–366; the sequence is DKIQCETMTK…DAYLDYFNNS (118 aa). One can recognise a NodB homology domain in the interval 402–578; the sequence is KLIALTFDDG…GLKNQGYTFV (177 aa).

The protein belongs to the glycosyl hydrolase 11 (cellulase G) family. In terms of processing, in the later growth phases, seems to undergo a proteolytic cleavage into a 30 kDa protein possessing xylanolytic activity.

The protein localises to the secreted. The enzyme catalyses Endohydrolysis of (1-&gt;4)-beta-D-xylosidic linkages in xylans.. It functions in the pathway glycan degradation; xylan degradation. Endo-acting xylanase which specifically cleaves internal linkages on the xylan backbone, releasing xylooligosaccharides. Is also probably able, via its C-terminal domain, to remove acetyl groups from acetylated xylan, and thus it is probably capable of hydrolyzing acetylated xylan. The sequence is that of Bifunctional xylanase/deacetylase (xyn11A) from Pseudobutyrivibrio xylanivorans.